The following is a 1288-amino-acid chain: Outer capsid protein lambda-2 (1288 aa).

892-899 (GAAAAGKS) contacts ATP.

This sequence belongs to the orthoreovirus lambda-2 protein family. As to quaternary structure, interacts with protein mu-NS; in viral inclusions.

It localises to the virion. It catalyses the reaction a 5'-end diphospho-ribonucleoside in mRNA + GTP + H(+) = a 5'-end (5'-triphosphoguanosine)-ribonucleoside in mRNA + diphosphate. It carries out the reaction a 5'-end (5'-triphosphoguanosine)-ribonucleoside in mRNA + S-adenosyl-L-methionine = a 5'-end (N(7)-methyl 5'-triphosphoguanosine)-ribonucleoside in mRNA + S-adenosyl-L-homocysteine. In terms of biological role, outer capsid protein involved in mRNA capping. Catalyzes the last 3 enzymatic activities for formation of the 5' cap structure on the viral plus-strand transcripts, namely the RNA guanylyltransferase, RNA-7N- and RNA-2'O-methyltransferase activities. The protein is Outer capsid protein lambda-2 (L2) of Reovirus type 2 (strain D5/Jones) (T2J).